A 1213-amino-acid chain; its full sequence is Oligopeptidase PhomG' (1213 aa).

A Zn(2+)-binding site is contributed by H447. The active site involves E448. Residues H451 and H454 each contribute to the Zn(2+) site.

This sequence belongs to the peptidase M3 family. As to quaternary structure, monomer. It depends on Zn(2+) as a cofactor.

It functions in the pathway mycotoxin biosynthesis. Oligopeptidase; part of the gene cluster that mediates the biosynthesis of the phomopsins, a group of hexapeptide mycotoxins which infects lupins and causes lupinosis disease in livestock. Within the pathway, phomG and phomG' are probably involved in the processing of the phomA and phomA' precursors. The pathway starts with the processing of the precursor phomA by several endopeptidases including kexin proteases as well as the cluster-specific S41 family peptidase phomP1 and the oligopeptidase phomG to produce 10 identical copies of the hexapeptide Tyr-Val-Ile-Pro-Ile-Asp. After being excised from the precursor peptide, the core peptides are cyclized and modified post-translationally by enzymes encoded within the gene cluster. The timing and order of proteolysis of the phomA precursor and PTMs are still unknown. Two tyrosinase-like enzymes, phomQ1 and phomQ2, catalyze the chlorination and hydroxylation of Tyr, respectively. PhomYb, is proposed to be involved in the construction of the macrocyclic structure. The other 4 ustYa family proteins may be involved in PTMs that generate the unique structure of phomopsin A. PhomYa is required for the hydroxylation of C-beta of Tyr. PhomYc, phomYd, and phomYe are responsible for the biosynthesis of 2,3-dehydroisoleucine (dIle), 2,3-dehydroaspartic acid (dAsp), and 3,4-dehydroproline (dPro), respectively. While dIle formation by phomYc is indispensable for the installation of dAsp by phomYd, the order of the other PTMs have not been elucidated yet. Most of the biosynthetic enzymes likely have broad substrate specificity, and thus, there might be a metabolic grid from a precursor to phomopsin A. The enzyme(s) responsible for the biosynthesis of 3,4-dehydrovaline (dVal) have also not been identified yet. Finally, phomM acts as an S-adenosylmethionine-dependent alpha-N-methyltransferase that catalyzes two successive N-methylation reactions, converting N-desmethyl-phomopsin A to phomopsin A and phomopsin A further to an N,N-dimethylated congener called phomopsin E. The polypeptide is Oligopeptidase PhomG' (Diaporthe leptostromiformis (Lupinosis disease fungus)).